The chain runs to 218 residues: 3-dehydroquinate dehydratase (218 aa).

Residues 29 to 31 (EFR) and R56 contribute to the 3-dehydroquinate site. H116 functions as the Proton donor/acceptor in the catalytic mechanism. Residue K142 is the Schiff-base intermediate with substrate of the active site. 3-dehydroquinate-binding residues include R180, S200, and Q204.

Belongs to the type-I 3-dehydroquinase family. Homodimer.

It catalyses the reaction 3-dehydroquinate = 3-dehydroshikimate + H2O. It functions in the pathway metabolic intermediate biosynthesis; chorismate biosynthesis; chorismate from D-erythrose 4-phosphate and phosphoenolpyruvate: step 3/7. In terms of biological role, involved in the third step of the chorismate pathway, which leads to the biosynthesis of aromatic amino acids. Catalyzes the cis-dehydration of 3-dehydroquinate (DHQ) and introduces the first double bond of the aromatic ring to yield 3-dehydroshikimate. The protein is 3-dehydroquinate dehydratase of Methanococcus maripaludis (strain C6 / ATCC BAA-1332).